The sequence spans 563 residues: O-fucosyltransferase 14 (563 aa).

A compositionally biased stretch (low complexity) spans 1-16; that stretch reads MVKVSSSTTSSSSSSS. The segment at 1-25 is disordered; it reads MVKVSSSTTSSSSSSSPDEESDLQN. A helical; Signal-anchor for type II membrane protein transmembrane segment spans residues 73 to 93; that stretch reads IFIFLPIVIILIYLSTDFSNY. Residues N135, N140, and N339 are each glycosylated (N-linked (GlcNAc...) asparagine). Substrate contacts are provided by residues 412–414 and 528–529; these read HFR and TF.

This sequence belongs to the glycosyltransferase GT106 family.

Its subcellular location is the membrane. The protein operates within glycan metabolism. This is O-fucosyltransferase 14 from Arabidopsis thaliana (Mouse-ear cress).